We begin with the raw amino-acid sequence, 125 residues long: UPF0102 protein PA4424 (125 aa).

It belongs to the UPF0102 family.

The chain is UPF0102 protein PA4424 from Pseudomonas aeruginosa (strain ATCC 15692 / DSM 22644 / CIP 104116 / JCM 14847 / LMG 12228 / 1C / PRS 101 / PAO1).